The primary structure comprises 353 residues: Nicotinate-nucleotide--dimethylbenzimidazole phosphoribosyltransferase (353 aa).

The Proton acceptor role is filled by Glu318.

This sequence belongs to the CobT family.

It carries out the reaction 5,6-dimethylbenzimidazole + nicotinate beta-D-ribonucleotide = alpha-ribazole 5'-phosphate + nicotinate + H(+). Its pathway is nucleoside biosynthesis; alpha-ribazole biosynthesis; alpha-ribazole from 5,6-dimethylbenzimidazole: step 1/2. Catalyzes the synthesis of alpha-ribazole-5'-phosphate from nicotinate mononucleotide (NAMN) and 5,6-dimethylbenzimidazole (DMB). The protein is Nicotinate-nucleotide--dimethylbenzimidazole phosphoribosyltransferase of Roseiflexus sp. (strain RS-1).